Consider the following 93-residue polypeptide: uncharacterized protein (93 aa).

Residues 36–69 are a coiled coil; sequence SEERLLSRLFEEMDELREAVEKEDWENLRDELLD.

This is an uncharacterized protein from Archaeoglobus fulgidus (strain ATCC 49558 / DSM 4304 / JCM 9628 / NBRC 100126 / VC-16).